A 182-amino-acid polypeptide reads, in one-letter code: UPF0397 protein BCE_2667 (182 aa).

The next 5 membrane-spanning stretches (helical) occupy residues 9 to 29, 40 to 60, 71 to 91, 114 to 134, and 142 to 162; these read VVAI…GFSI, AILT…IGLI, WGIW…MGLI, ITGL…DIIV, and IVIQ…VLGL.

Belongs to the UPF0397 family.

The protein localises to the cell membrane. The polypeptide is UPF0397 protein BCE_2667 (Bacillus cereus (strain ATCC 10987 / NRS 248)).